The chain runs to 78 residues: Small ribosomal subunit protein bS18 (78 aa).

Belongs to the bacterial ribosomal protein bS18 family. In terms of assembly, part of the 30S ribosomal subunit. Forms a tight heterodimer with protein bS6.

Binds as a heterodimer with protein bS6 to the central domain of the 16S rRNA, where it helps stabilize the platform of the 30S subunit. This is Small ribosomal subunit protein bS18 from Thermobifida fusca (strain YX).